Consider the following 444-residue polypeptide: Ribosome biogenesis protein YTM1 (444 aa).

The ubiquitin-like (UBL) domain stretch occupies residues 8 to 89 (VKLRFFTREE…ETFLNVEYTR (82 aa)). 7 WD repeats span residues 99 to 138 (SFDNEDWVSSLDVGSNYIYSGSYDGIVRTYNLSGKVEKQY), 140 to 178 (GHSGPIRAVHYISSTRLVSAGNDRTLRLWKTKNDDLKSI), 194 to 231 (GHKAPVVSIDVSKDRILSASCDNTVSLWSTNYKEMTVI), 269 to 309 (SHSA…CVDT), 311 to 350 (TTSYSLLSVAQLPKLNLLACGSSARHITLHDPRVNSSSKI), 357 to 397 (GHKN…AMYT), and 408 to 444 (GVNDKVFAVKWAKGVGIISGGQDKKIQINKGDNIFSN). Residues 99–444 (SFDNEDWVSS…INKGDNIFSN (346 aa)) are sufficient for interaction with ERB1 and association with 66S pre-ribosomes.

Belongs to the WD repeat WDR12/YTM1 family. Component of the NOP7 complex, composed of ERB1, NOP7 and YTM1. The complex is held together by ERB1, which interacts with NOP7 via its N-terminal domain and with YTM1 via a high-affinity interaction between the seven-bladed beta-propeller domains of the 2 proteins. The NOP7 complex associates with the 66S pre-ribosome. Interacts (via UBL domain) with MDN1 (via VWFA/MIDAS domain).

It localises to the nucleus. The protein localises to the nucleolus. The protein resides in the nucleoplasm. In terms of biological role, component of the NOP7 complex, which is required for maturation of the 25S and 5.8S ribosomal RNAs and formation of the 60S ribosome. The protein is Ribosome biogenesis protein YTM1 of Kluyveromyces lactis (strain ATCC 8585 / CBS 2359 / DSM 70799 / NBRC 1267 / NRRL Y-1140 / WM37) (Yeast).